The following is a 275-amino-acid chain: Fructose permease IID component (275 aa).

One can recognise a PTS EIID domain in the interval 5-274; the sequence is KRLTKKEIFS…GILGYWAGFL (270 aa). A run of 5 helical transmembrane segments spans residues 100 to 120, 127 to 147, 187 to 207, 227 to 247, and 255 to 275; these read MKIGLMGPIAGVGDPIFWGTI, LGASLALGGNIAGPLLFFFLL, ILGLFVMGALVSKWTTINIPI, VLDSIMPGALPLGLTLLVAWM, and LLIICGIFVIGILGYWAGFLA.

The protein resides in the cell membrane. The phosphoenolpyruvate-dependent sugar phosphotransferase system (PTS), a major carbohydrate active -transport system, catalyzes the phosphorylation of incoming sugar substrates concomitant with their translocation across the cell membrane. This system is involved in fructose transport. This chain is Fructose permease IID component (levG), found in Bacillus subtilis (strain 168).